Consider the following 239-residue polypeptide: Sugar fermentation stimulation protein homolog (239 aa).

Belongs to the SfsA family.

This chain is Sugar fermentation stimulation protein homolog, found in Shewanella woodyi (strain ATCC 51908 / MS32).